Consider the following 883-residue polypeptide: Phosphoenolpyruvate carboxylase (883 aa).

Residues His138 and Lys546 contribute to the active site.

The protein belongs to the PEPCase type 1 family. Requires Mg(2+) as cofactor.

The catalysed reaction is oxaloacetate + phosphate = phosphoenolpyruvate + hydrogencarbonate. Forms oxaloacetate, a four-carbon dicarboxylic acid source for the tricarboxylic acid cycle. This is Phosphoenolpyruvate carboxylase from Escherichia coli O45:K1 (strain S88 / ExPEC).